Consider the following 291-residue polypeptide: Protease HtpX (291 aa).

2 helical membrane-spanning segments follow: residues isoleucine 4 to leucine 24 and glycine 36 to isoleucine 56. A Zn(2+)-binding site is contributed by histidine 142. The active site involves glutamate 143. Histidine 146 is a Zn(2+) binding site. Helical transmembrane passes span glycine 150 to alanine 170 and phenylalanine 193 to tryptophan 213. Residue glutamate 219 participates in Zn(2+) binding.

This sequence belongs to the peptidase M48B family. Requires Zn(2+) as cofactor.

The protein resides in the cell inner membrane. In Pseudomonas aeruginosa (strain LESB58), this protein is Protease HtpX.